Here is a 25-residue protein sequence, read N- to C-terminus: Androctonin (25 aa).

2 disulfides stabilise this stretch: C4–C20 and C10–C16.

It is found in the secreted. Active against both bacteria (Gram-positive and Gram-negative) and filamentous fungi. Acts on the membrane of the bacterial cells. It destabilize a membrane by modifying its properties. In Androctonus australis (Sahara scorpion), this protein is Androctonin.